Reading from the N-terminus, the 419-residue chain is UPF0242 protein TC_0906 (419 aa).

This sequence belongs to the UPF0242 family.

This is UPF0242 protein TC_0906 from Chlamydia muridarum (strain MoPn / Nigg).